A 313-amino-acid polypeptide reads, in one-letter code: Protein EMSY-LIKE 2 (313 aa).

The ENT domain occupies 1–88 (MEAQIHILEQ…HQSLDVHPSP (88 aa)). The stretch at 35-58 (MTNLRKELRISDDENRQLLNNVHN) forms a coiled coil. 2 disordered regions span residues 84–106 (VHPS…YPSI) and 195–229 (LNVG…REHL). The span at 206–219 (GNRRTLSHGGRGRG) shows a compositional bias: basic residues. Residues 267-293 (HELDKAKKLLKEHEQALIAAIARLTDA) adopt a coiled-coil conformation. S294 bears the Phosphoserine mark. Positions 294 to 313 (SDYESDGEEPYSHELPMLLG) are disordered.

Interacts with EDM2 in nucleus.

It localises to the nucleus. In terms of biological role, probably involved in the regulation of chromatin states. Contributes to RPP7-mediated and basal immunity, especially against Hyaloperonospora arabidopsidis isolate Hiks1. Regulates negatively EDM2-dependent floral transition. The chain is Protein EMSY-LIKE 2 from Arabidopsis thaliana (Mouse-ear cress).